The following is a 228-amino-acid chain: Cytochrome P450 monooxygenase ataY (228 aa).

Cys-216 contacts heme.

Belongs to the cytochrome P450 family. Requires heme as cofactor.

It participates in mycotoxin biosynthesis. Functionally, cytochrome P450 monooxygenase; part of the gene cluster that mediates the biosynthesis of acetylaranotin, a member of the epipolythiodioxopiperazine (ETP) class of toxins characterized by a disulfide-bridged cyclic dipeptide. The first step of acetylaranotin biosynthesis is performed by the NRPS ataP which produces diketopiperazine cyclo-L-Phe-L-Phe via the condensation of 2 phenylalanines (L-Phe). The ataC domain of ataTC then catalyzes the formation of bishydroxylation of cyclo-L-Phe-L-Phe. The glutathione S-transferase domain ataG in ataIMG further catalyzes the conjugation of two glutathiones to the bishydroxylated intermediate. Next, the dipeptidase ataJ removes the Glu residues. The following step is performed by the carbon sulfur lyase domain ataI of ataIMG which may convert the bis-cysteinyl adduct to yield an epidithiol intermediate. The ataT domain from ataTC then catalyzes the oxidation of the free dithiols, followed by a cyclization step catalyzed by the cytochrome P450 ataF. AtaF probably acts as an epoxidase to promote a dual epoxidation formation at C8 and C9 along with C8' and C9', followed by the spontaneous nucleophilic attack of the amide nitrogens N10 and N10' to yield an intermediate with the pyrrolidine partial structure. The final steps of acetylaranotin biosynthesis involve the acetylation and ring rearrangement of an epitetrathiodiketopiperazine intermediate to produce acetylaranotin. AtaH probably catalyzes the acetylation of epitetrathiodiketopiperazine to produce a diacetate and ataY is responsible for the formation of the dihydrooxepin moiety that converts the diacetate intermediate to acetylaranotin via acetylapoaranotin. Both enzymes could function independently in the absence of the other. The acetylaranotin bis-thiomethyltransferase ataS located outside of acetylaranotin gene cluster is the main thiomethyltransferase responsible for converting acetylaranotin and its related intermediates to their methylated forms. This chain is Cytochrome P450 monooxygenase ataY, found in Aspergillus terreus (strain NIH 2624 / FGSC A1156).